Consider the following 756-residue polypeptide: Xylosyl- and glucuronyltransferase LARGE1 (756 aa).

The Cytoplasmic portion of the chain corresponds to Met1–Lys10. Residues Phe11 to Ala31 traverse the membrane as a helical; Signal-anchor for type II membrane protein segment. The Lumenal segment spans residues Gly32–Ser756. Disordered regions lie at residues Leu42–Glu63 and Lys81–Gly109. Polar residues predominate over residues Pro44–Ser58. Residues Thr55 to Ser90 adopt a coiled-coil conformation. Residues Asn97, Asn122, and Asn148 are each glycosylated (N-linked (GlcNAc...) asparagine). The tract at residues Ile138–Arg413 is xylosyltransferase activity. Mn(2+) is bound by residues Asp242 and Asp244. N-linked (GlcNAc...) asparagine glycosylation is present at Asn272. The tract at residues Arg414–Ser756 is glucuronyltransferase activity. Asp563 and Asp565 together coordinate Mn(2+).

It in the C-terminal section; belongs to the glycosyltransferase 49 family. In the N-terminal section; belongs to the glycosyltransferase 8 family. Requires Mn(2+) as cofactor.

Its subcellular location is the golgi apparatus membrane. It catalyses the reaction 3-O-[beta-D-GlcA-(1-&gt;3)-beta-D-Xyl-(1-&gt;4)-Rib-ol-P-Rib-ol-P-3-beta-D-GalNAc-(1-&gt;3)-beta-D-GlcNAc-(1-&gt;4)-(O-6-P-alpha-D-Man)]-Thr-[protein] + UDP-alpha-D-xylose = 3-O-[alpha-D-Xyl-(1-&gt;3)-beta-D-GlcA-(1-&gt;4)-beta-D-Xyl-(1-&gt;4)-Rib-ol-P-Rib-ol-P-3-beta-D-GalNAc-(1-&gt;3)-beta-D-GlcNAc-(1-&gt;4)-(O-6-P-alpha-D-Man)]-Thr-[protein] + UDP + H(+). It carries out the reaction 3-O-{(1-&gt;[3)-alpha-D-Xyl-(1-&gt;3)-beta-D-GlcA-(1-&gt;](n)-4)-beta-D-Xyl-(1-&gt;4)-Rib-ol-P-Rib-ol-P-3-beta-D-GalNAc-(1-&gt;3)-beta-D-GlcNAc-(1-&gt;4)-O-6-P-alpha-D-Man}-L-Thr-[protein] + UDP-alpha-D-glucuronate = 3-O-{beta-D-GlcA-(1-&gt;[3)-alpha-D-Xyl-(1-&gt;3)-beta-D-GlcA-(1-&gt;](n)-4)-beta-D-Xyl-(1-&gt;4)-Rib-ol-P-Rib-ol-P-3-beta-D-GalNAc-(1-&gt;3)-beta-D-GlcNAc-(1-&gt;4)-O-6-P-alpha-D-Man}-L-Thr-[protein] + UDP + H(+). The enzyme catalyses 3-O-{beta-D-GlcA-(1-&gt;[3)-alpha-D-Xyl-(1-&gt;3)-beta-D-GlcA-(1-&gt;](n)-4)-beta-D-Xyl-(1-&gt;4)-Rib-ol-P-Rib-ol-P-3-beta-D-GalNAc-(1-&gt;3)-beta-D-GlcNAc-(1-&gt;4)-O-6-P-alpha-D-Man}-L-Thr-[protein] + UDP-alpha-D-xylose = 3-O-{(1-&gt;[3)-alpha-D-Xyl-(1-&gt;3)-beta-D-GlcA-(1-&gt;](n+1)-4)-beta-D-Xyl-(1-&gt;4)-Rib-ol-P-Rib-ol-P-3-beta-D-GalNAc-(1-&gt;3)-beta-D-GlcNAc-(1-&gt;4)-O-6-P-alpha-D-Man}-L-Thr-[protein] + UDP + H(+). The protein operates within protein modification; protein glycosylation. Bifunctional glycosyltransferase with both alpha-1,3-xylosyltransferase and beta-1,3-glucuronyltransferase activities involved in the maturation of alpha-dystroglycan (DAG1) by glycosylation leading to DAG1 binding to laminin G-like domain-containing extracellular proteins with high affinity. Elongates the glucuronyl-beta-1,4-xylose-beta disaccharide primer structure initiated by B4GAT1 by adding repeating units [-3-Xylose-alpha-1,3-GlcA-beta-1-] to produce a heteropolysaccharide. Requires the phosphorylation of core M3 (O-mannosyl trisaccharide) by POMK to elongate the glucuronyl-beta-1,4-xylose-beta disaccharide primer. Plays a key role in skeletal muscle function and regeneration. The protein is Xylosyl- and glucuronyltransferase LARGE1 of Gallus gallus (Chicken).